The sequence spans 28 residues: Cysteine-rich venom protein asurin-2 (28 aa).

The span at Ser1–Asn15 shows a compositional bias: basic and acidic residues. The interval Ser1–Met28 is disordered. The segment covering Leu17–Met28 has biased composition (polar residues).

This sequence belongs to the CRISP family. Contains 8 disulfide bonds. As to expression, expressed by the venom gland.

The protein localises to the secreted. Functionally, blocks contraction of smooth muscle elicited by high potassium-induced depolarization, but does not block caffeine-stimulated contraction. May target voltage-gated calcium channels on smooth muscle. This is Cysteine-rich venom protein asurin-2 from Austrelaps superbus (Lowland copperhead snake).